The sequence spans 106 residues: MVNVPKTRRTYCKGKDCRKHTQHKVTQYKAGKASLFAQGKRRYDRKQSGFGGQTKPVFHKKAKTTKKVVLRLECVVCKTKAQLSLKRCKHFELGGDKKQKGQALQF.

Belongs to the eukaryotic ribosomal protein eL42 family.

The polypeptide is Large ribosomal subunit protein eL42 (RPL44) (Meyerozyma guilliermondii (strain ATCC 6260 / CBS 566 / DSM 6381 / JCM 1539 / NBRC 10279 / NRRL Y-324) (Yeast)).